A 929-amino-acid chain; its full sequence is Facilitated trehalose transporter Tret1 (929 aa).

The disordered stretch occupies residues 1–275 (MSGRDNRAAG…VGYQQQKATS (275 aa)). Residues 1–462 (MSGRDNRAAG…LEVYRPTTNP (462 aa)) are Cytoplasmic-facing. The segment covering 10–26 (GAGGGSGGGGGGGGGGG) has biased composition (gly residues). The segment covering 41-59 (KLKEKLTRAGEELGYHRVE) has biased composition (basic and acidic residues). Positions 60-72 (SNLSASNTATSLD) are enriched in polar residues. Low complexity-rich tracts occupy residues 85 to 141 (AAPQ…QPLR), 168 to 178 (QEIQQQQLQQQ), and 237 to 254 (SNSN…VAAD). A phosphoserine mark is found at serine 320, serine 321, and serine 322. Positions 352-371 (VLHGSSTDSDEEGEDAEHKR) are disordered. Phosphoserine is present on residues serine 392 and serine 394. Residues 398–420 (FLSSRQNFQQQRSISTDSRKSRR) form a disordered region. The segment covering 402-413 (RQNFQQQRSIST) has biased composition (polar residues). A helical transmembrane segment spans residues 463 to 483 (IYIWTQVLAALSVSLGSLVVG). Topologically, residues 484-512 (FSSAYTSPALVSMTDRNLTSFDVSTEDAS) are extracellular. Asparagine 500 is a glycosylation site (N-linked (GlcNAc...) asparagine). Residues 513–533 (WVGGIMPLAGLAGGIAGGPLI) traverse the membrane as a helical segment. Over 534-541 (EYLGRRNT) the chain is Cytoplasmic. Residues 542 to 562 (ILATAVPFIISWLLIACAVNV) form a helical membrane-spanning segment. At 563–569 (PMVLSGR) the chain is on the extracellular side. The chain crosses the membrane as a helical span at residues 570-590 (FLAGFCVGIASLSLPVYLGET). At 591–596 (VQPEVR) the chain is on the cytoplasmic side. The helical transmembrane segment at 597–617 (GTLGLLPTAFGNIGILLCFIA) threads the bilayer. Topologically, residues 618 to 624 (GTYMDWS) are extracellular. Residues 625 to 645 (MLAFLGGALPVPFLILMFLIP) traverse the membrane as a helical segment. Over 646-708 (ETPRWYVSRG…ELLKRSNLKP (63 aa)) the chain is Cytoplasmic. Residues 709–729 (LSISLGLMFFQQLSGINAVIF) traverse the membrane as a helical segment. The Extracellular portion of the chain corresponds to 730 to 745 (YTVQIFKDAGSTLDGN). Residues 746-766 (VCTIIVGTVNFIATFIGILLI) form a helical membrane-spanning segment. At 767–772 (DRAGRK) the chain is on the cytoplasmic side. A helical transmembrane segment spans residues 773–793 (ILLYVSNIAMILTLFVLGGFF). Residues 794 to 804 (YCKANGMDVSN) are Extracellular-facing. Residues 805–825 (VGLLPLCCFVVYILGFSLGFG) form a helical membrane-spanning segment. Residues 826-839 (PIPWLMMGEILPAK) lie on the Cytoplasmic side of the membrane. Residues 840 to 860 (IRGSAASVATAFNWTCTFVVT) form a helical membrane-spanning segment. Over 861 to 873 (KSFLDMIKLIGAH) the chain is Extracellular. Residues 874–894 (GAFWLFGVICCIGMFFVIFCV) traverse the membrane as a helical segment. At 895–929 (PETQGKTLEDIERKMMGRVRRMSSVANIKPLSFNM) the chain is on the cytoplasmic side. A phosphoserine mark is found at serine 917 and serine 918.

Belongs to the major facilitator superfamily. Sugar transporter (TC 2.A.1.1) family. Trehalose transporter subfamily.

It localises to the cell membrane. Functionally, low-capacity facilitative transporter for trehalose. Does not transport maltose, sucrose or lactose. Mediates the bidirectional transfer of trehalose. Responsible for the transport of trehalose synthesized in the fat body and the incorporation of trehalose into other tissues that require a carbon source, thereby regulating trehalose levels in the hemolymph. This is Facilitated trehalose transporter Tret1 from Drosophila grimshawi (Hawaiian fruit fly).